Here is a 156-residue protein sequence, read N- to C-terminus: Small ribosomal subunit protein uS7 (156 aa).

This sequence belongs to the universal ribosomal protein uS7 family. As to quaternary structure, part of the 30S ribosomal subunit. Contacts proteins S9 and S11.

Functionally, one of the primary rRNA binding proteins, it binds directly to 16S rRNA where it nucleates assembly of the head domain of the 30S subunit. Is located at the subunit interface close to the decoding center, probably blocks exit of the E-site tRNA. The polypeptide is Small ribosomal subunit protein uS7 (Solibacter usitatus (strain Ellin6076)).